The following is a 386-amino-acid chain: MNSLQVLTKKVLIETKAFSNYHEDDIFILQQLGLWWENGPIGFCKQCKMVTSGSMSCSDVDSYELDRALVKAVKENQTDLIKLFVLWGADINFGIICAKTKQTKDLCIQLGADPEFLDVGLYNMFVYLVKRKKVLLAIEIYYDNISILDSFDSHDFHVLIDFVYNRFILYLDEKEKEMTRNTLVLRFWYKFAIDFKLTKPIRYLSKKFPHLDLWRLQTAIYLGNIDEVHHAYFQENIRLRLNVMMFLACARPGNKLGIYYCFALGADLDHALERLISFNSINREINRKISGKTRLCIEGSYLSNIYFCIGLGANPYTKKIQETIKQKNSNIMILLYSKKKILSPHSVLQNKILDPSDVYKMISTYKNTESFYPFSSLAVKLIQQAK.

Belongs to the asfivirus MGF 360 family.

Functionally, plays a role in virus cell tropism, and may be required for efficient virus replication in macrophages. The sequence is that of Protein MGF 360-4L from Ornithodoros (relapsing fever ticks).